The chain runs to 35 residues: Thrombin-like enzyme cerastobin (35 aa).

The Peptidase S1 domain maps to 1-35 (VIGGAKCNINEHRSIVLLYSSRLFGHTLINKEWVL).

This sequence belongs to the peptidase S1 family. Snake venom subfamily. In terms of assembly, monomer. Expressed by the venom gland.

It is found in the secreted. Inhibited by diisopropylfluorophosphate (DFP). Its function is as follows. Thrombin-like snake venom serine protease, that cleaves both alpha-chain (FGA) and beta-chain (FGB) of fibrinogen. Partially degrades factor X (F10), and release bradykinin from kininogen (KNG). Potently induces platelet aggregation. Shows a proteolytic activity towards protein constituents of the platelets cytoskeleton. Hydrolyzes actin, actin-binding protein, and P235. Shows a preferential cleavage at Arg-|-Xaa bonds. In Cerastes vipera (Sahara sand viper), this protein is Thrombin-like enzyme cerastobin.